The chain runs to 189 residues: Small ribosomal subunit protein uS5 (189 aa).

The 64-residue stretch at 22–85 (LIDKLVTINR…ERAKRGMIRV (64 aa)) folds into the S5 DRBM domain. A disordered region spans residues 164–189 (SVASRRGKKVADLFGPKREKEAPADV). Basic and acidic residues predominate over residues 172-189 (KVADLFGPKREKEAPADV).

Belongs to the universal ribosomal protein uS5 family. In terms of assembly, part of the 30S ribosomal subunit. Contacts proteins S4 and S8.

With S4 and S12 plays an important role in translational accuracy. Its function is as follows. Located at the back of the 30S subunit body where it stabilizes the conformation of the head with respect to the body. The protein is Small ribosomal subunit protein uS5 of Acidiphilium cryptum (strain JF-5).